Consider the following 913-residue polypeptide: Alanine--tRNA ligase (913 aa).

Zn(2+)-binding residues include H608, H612, C711, and H715.

Belongs to the class-II aminoacyl-tRNA synthetase family. Zn(2+) is required as a cofactor.

Its subcellular location is the cytoplasm. The enzyme catalyses tRNA(Ala) + L-alanine + ATP = L-alanyl-tRNA(Ala) + AMP + diphosphate. In terms of biological role, catalyzes the attachment of alanine to tRNA(Ala) in a two-step reaction: alanine is first activated by ATP to form Ala-AMP and then transferred to the acceptor end of tRNA(Ala). Also edits incorrectly charged Ser-tRNA(Ala) and Gly-tRNA(Ala) via its editing domain. This is Alanine--tRNA ligase from Methanocorpusculum labreanum (strain ATCC 43576 / DSM 4855 / Z).